Here is a 447-residue protein sequence, read N- to C-terminus: Tubulin beta chain (447 aa).

GTP is bound by residues Q11, E69, S138, G142, T143, G144, N204, and N226. E69 provides a ligand contact to Mg(2+). The tract at residues 419–447 (VSEYQQYQDATADEEGEYEDEDQEAEDDM) is disordered. Positions 429-447 (TADEEGEYEDEDQEAEDDM) are enriched in acidic residues.

The protein belongs to the tubulin family. Dimer of alpha and beta chains. A typical microtubule is a hollow water-filled tube with an outer diameter of 25 nm and an inner diameter of 15 nM. Alpha-beta heterodimers associate head-to-tail to form protofilaments running lengthwise along the microtubule wall with the beta-tubulin subunit facing the microtubule plus end conferring a structural polarity. Microtubules usually have 13 protofilaments but different protofilament numbers can be found in some organisms and specialized cells. Mg(2+) serves as cofactor.

Its subcellular location is the cytoplasm. It localises to the cytoskeleton. In terms of biological role, tubulin is the major constituent of microtubules, a cylinder consisting of laterally associated linear protofilaments composed of alpha- and beta-tubulin heterodimers. Microtubules grow by the addition of GTP-tubulin dimers to the microtubule end, where a stabilizing cap forms. Below the cap, tubulin dimers are in GDP-bound state, owing to GTPase activity of alpha-tubulin. The protein is Tubulin beta chain (TUBB) of Hordeum vulgare (Barley).